Consider the following 498-residue polypeptide: Cystathionine beta-synthase (498 aa).

The interval 1–25 is disordered; it reads MSAPEGPSKCTWTPNTTENTPHTTR. Positions 11-22 are enriched in low complexity; it reads TWTPNTTENTPH. K73 bears the N6-(pyridoxal phosphate)lysine mark. Pyridoxal 5'-phosphate contacts are provided by residues N103, 210-214, and S302; that span reads GTGGT. 2 consecutive CBS domains span residues 374-430 and 435-497; these read TLPK…KKAV and VSKV…SQQK.

This sequence belongs to the cysteine synthase/cystathionine beta-synthase family. The cofactor is pyridoxal 5'-phosphate.

The enzyme catalyses L-homocysteine + L-serine = L,L-cystathionine + H2O. The protein operates within amino-acid biosynthesis; L-cysteine biosynthesis; L-cysteine from L-homocysteine and L-serine: step 1/2. In Dictyostelium discoideum (Social amoeba), this protein is Cystathionine beta-synthase (cysB).